The primary structure comprises 166 residues: Protein SprT (166 aa).

Positions 21–160 (ANQHFSREFP…CQQCQQTLAF (140 aa)) constitute a SprT-like domain. Zn(2+) is bound at residue H74. Residue E75 is part of the active site. H78 is a binding site for Zn(2+).

It belongs to the SprT family. Zn(2+) is required as a cofactor.

The protein resides in the cytoplasm. In Vibrio atlanticus (strain LGP32) (Vibrio splendidus (strain Mel32)), this protein is Protein SprT.